The sequence spans 122 residues: Large ribosomal subunit protein uL14 (122 aa).

The protein belongs to the universal ribosomal protein uL14 family. In terms of assembly, part of the 50S ribosomal subunit. Forms a cluster with proteins L3 and L19. In the 70S ribosome, L14 and L19 interact and together make contacts with the 16S rRNA in bridges B5 and B8.

Functionally, binds to 23S rRNA. Forms part of two intersubunit bridges in the 70S ribosome. This Trichormus variabilis (strain ATCC 29413 / PCC 7937) (Anabaena variabilis) protein is Large ribosomal subunit protein uL14.